A 270-amino-acid chain; its full sequence is tRNA pseudouridine synthase A (270 aa).

D60 (nucleophile) is an active-site residue. An RNA binding region spans residues 107–111 (FHARF). Y118 provides a ligand contact to substrate. Residues 168–172 (QCQSR) form an interaction with tRNA region.

The protein belongs to the tRNA pseudouridine synthase TruA family. As to quaternary structure, homodimer.

The catalysed reaction is uridine(38/39/40) in tRNA = pseudouridine(38/39/40) in tRNA. Formation of pseudouridine at positions 38, 39 and 40 in the anticodon stem and loop of transfer RNAs. This chain is tRNA pseudouridine synthase A, found in Escherichia coli O9:H4 (strain HS).